The following is a 140-amino-acid chain: Profilin-2 (140 aa).

Position 2 is an N-acetylalanine (A2).

It belongs to the profilin family. As to quaternary structure, occurs in many kinds of cells as a complex with monomeric actin in a 1:1 ratio. Interacts with PFN2. Interacts with ACTMAP (via N-terminus); the interaction may facilitate efficient cleavage of the acetylated N-terminus of immature actin by ACTMAP.

It localises to the cytoplasm. The protein resides in the cytoskeleton. In terms of biological role, binds to actin and affects the structure of the cytoskeleton. At high concentrations, profilin prevents the polymerization of actin, whereas it enhances it at low concentrations. By binding to PIP2, it inhibits the formation of IP3 and DG. The polypeptide is Profilin-2 (Pfn2) (Rattus norvegicus (Rat)).